A 551-amino-acid chain; its full sequence is Pentatricopeptide repeat-containing protein At3g13150 (551 aa).

The segment at 22 to 67 (ATAKSAKPRSQTKSTKFPSKLKASTASVGDGGQSSNDAKDSKNSKL) is disordered. The span at 29-48 (PRSQTKSTKFPSKLKASTAS) shows a compositional bias: polar residues. A compositionally biased stretch (basic and acidic residues) spans 58-67 (DAKDSKNSKL). PPR repeat units lie at residues 121–155 (SEDF…NCER), 156–191 (TVKS…GITP), 192–226 (DLVT…GFEP), 227–261 (DLIS…NLSP), 262–296 (NIRS…GISP), 297–331 (DVHT…GLTP), and 332–366 (DTVT…KLLS). Disordered regions lie at residues 409–435 (GKKK…SPDT) and 449–551 (SSSD…LLDD). Residues 415 to 435 (SSPVSSSAKTTSTPVSSSPDT) show a composition bias toward low complexity.

It belongs to the PPR family. P subfamily.

The protein is Pentatricopeptide repeat-containing protein At3g13150 of Arabidopsis thaliana (Mouse-ear cress).